The primary structure comprises 822 residues: Collagen alpha chain CG42342 (822 aa).

2 disordered regions span residues 1-45 and 66-99; these read MRKH…VEAP and RLAP…KERP. Over 1–104 the chain is Cytoplasmic; it reads MRKHKAPPSG…SKERPRPTVR (104 aa). Residues 11-25 are compositionally biased toward polar residues; that stretch reads SPRTMAQDNSQSEPS. Positions 76–94 are enriched in low complexity; that stretch reads INNSNNNSNISNNSSNSSS. A helical; Signal-anchor for type II membrane protein transmembrane segment spans residues 105–125; that stretch reads FISLLHVASYVLCLCAFSFAL. Residues 126–822 lie on the Extracellular side of the membrane; it reads YGNVRQTRLE…EYQDNLHNNE (697 aa). Residues 131 to 162 adopt a coiled-coil conformation; that stretch reads QTRLEQRMQRLQQLDARIVELELRLEQQQLLH. Disordered stretches follow at residues 169–188, 205–297, and 345–822; these read QVLA…NGSQ, VSHL…GHPG, and LKGE…HNNE. A coiled-coil region spans residues 194 to 222; the sequence is VRRELHRLRRDVSHLQLTRRQQRRQAAEA. Collagen-like domains are found at residues 241 to 299, 350 to 409, 430 to 469, 493 to 526, 527 to 586, 621 to 680, and 681 to 740; these read QPGP…PGMD, GEPG…KGDR, GPPG…GKRG, RGPP…PGSL, GPRG…KGDK, GPPG…SGKA, and GIPG…KGEQ. A compositionally biased stretch (pro residues) spans 242–251; sequence PGPPGPPGPP. The span at 284-293 shows a compositional bias: basic and acidic residues; it reads PGDKGQKGDV. Low complexity predominate over residues 360–402; sequence EAGQPGAPGERGPPGEIGAQGPQGEAGQPGVAGPPGVAGAPGT. Residues 403–412 are compositionally biased toward basic and acidic residues; the sequence is KGDKGDRGDR. The segment covering 431-443 has biased composition (pro residues); the sequence is PPGPAGPPGPPGE. Positions 504 to 517 are enriched in basic and acidic residues; sequence KDGRDGRDGSKGEP. Residues 522 to 540 are compositionally biased toward low complexity; the sequence is EPGSLGPRGLDGLPGEPGI. Pro residues predominate over residues 567-579; sequence LMGPPGLPGPPGY. The span at 583 to 602 shows a compositional bias: basic and acidic residues; sequence KGDKGDRGDSYRKMRRRQDD. Residues 619–628 show a composition bias toward pro residues; that stretch reads PPGPPGPMGP. Basic and acidic residues predominate over residues 638 to 655; that stretch reads RGLDGRKGDPGEKGHKGD. Low complexity predominate over residues 658 to 668; sequence PMGLPGPMGMR. A coiled-coil region spans residues 790–822; sequence TSDYEQEEEEDDEQAEDNENEYDEYQDNLHNNE. Acidic residues predominate over residues 793 to 815; the sequence is YEQEEEEDDEQAEDNENEYDEYQ.

The protein resides in the cell membrane. This chain is Collagen alpha chain CG42342, found in Drosophila melanogaster (Fruit fly).